A 358-amino-acid polypeptide reads, in one-letter code: Septin-12 (358 aa).

The interval 1-25 is disordered; the sequence is MDPLRRSPSPCLSSQPSSPSTPPCE. Positions 6–18 are enriched in low complexity; that stretch reads RSPSPCLSSQPSS. The Septin-type G domain maps to 46-317; that stretch reads MGFEFNIMVV…ENYRVIRLNE (272 aa). An interaction with SEPTIN7 region spans residues 46 to 319; the sequence is MGFEFNIMVV…YRVIRLNESH (274 aa). Residues 56–63 form a G1 motif region; it reads GQSGLGKS. GTP contacts are provided by residues 56-63, T89, G115, 195-203, G251, and R266; these read GQSGLGKS and RADSLTMEE. Positions 112 to 115 are G3 motif; sequence DTPG. The tract at residues 194–197 is G4 motif; the sequence is ARAD. Residues 258 to 358 form a self-association (via N-terminus) to polymerize octameric septin 12-7-6-2/4-2/4-6-7-12 filaments region; that stretch reads VNGRCVLGRK…GAHDDSDDEF (101 aa).

It belongs to the TRAFAC class TrmE-Era-EngA-EngB-Septin-like GTPase superfamily. Septin GTPase family. Septins polymerize into heterooligomeric protein complexes that form filaments, and can associate with cellular membranes, actin filaments and microtubules. GTPase activity is required for filament formation. Interacts with SEPTIN6 and SEPTIN11. Self-associates. Component of a septin core octameric complex consisting of SEPTIN12, SEPTIN7, SEPTIN6 and SEPTIN2 or SEPTIN4 in the order 12-7-6-2-2-6-7-12 or 12-7-6-4-4-6-7-12 and located in the sperm annulus; the octamer polymerizes into filaments via the SEPTIN12 N- and C-termini; the SEPTIN12:SEPTIN7 association is mediated by the respective GTP-binding domains. Interacts with SPAG4 and LMNB1. Associates with alpha- and beta-tubulins. Widely expressed. Expressed in lymph node.

Its subcellular location is the cytoplasm. It localises to the cytoskeleton. The protein resides in the spindle. The protein localises to the nucleus. It is found in the cell projection. Its subcellular location is the cilium. It localises to the flagellum. Functionally, filament-forming cytoskeletal GTPase. Involved in spermatogenesis. Involved in the morphogenesis of sperm heads and the elongation of sperm tails probably implicating the association with alpha- and beta-tubulins. Forms a filamentous structure with SEPTIN7, SEPTIN6, SEPTIN2 and probably SEPTIN4 at the sperm annulus which is required for the structural integrity and motility of the sperm tail during postmeiotic differentiation. May play a role in cytokinesis (Potential). The polypeptide is Septin-12 (Homo sapiens (Human)).